Consider the following 83-residue polypeptide: ATP synthase subunit c (83 aa).

The next 2 helical transmembrane spans lie at 9 to 29 (LICV…GIGI) and 51 to 71 (MVFM…GLVI).

Belongs to the ATPase C chain family. As to quaternary structure, F-type ATPases have 2 components, F(1) - the catalytic core - and F(0) - the membrane proton channel. F(1) has five subunits: alpha(3), beta(3), gamma(1), delta(1), epsilon(1). F(0) has three main subunits: a(1), b(2) and c(10-14). The alpha and beta chains form an alternating ring which encloses part of the gamma chain. F(1) is attached to F(0) by a central stalk formed by the gamma and epsilon chains, while a peripheral stalk is formed by the delta and b chains.

The protein localises to the cell inner membrane. In terms of biological role, f(1)F(0) ATP synthase produces ATP from ADP in the presence of a proton or sodium gradient. F-type ATPases consist of two structural domains, F(1) containing the extramembraneous catalytic core and F(0) containing the membrane proton channel, linked together by a central stalk and a peripheral stalk. During catalysis, ATP synthesis in the catalytic domain of F(1) is coupled via a rotary mechanism of the central stalk subunits to proton translocation. Its function is as follows. Key component of the F(0) channel; it plays a direct role in translocation across the membrane. A homomeric c-ring of between 10-14 subunits forms the central stalk rotor element with the F(1) delta and epsilon subunits. The protein is ATP synthase subunit c of Desulfotalea psychrophila (strain LSv54 / DSM 12343).